A 286-amino-acid chain; its full sequence is 1D-myo-inositol 2-acetamido-2-deoxy-alpha-D-glucopyranoside deacetylase (286 aa).

Residues H12, D15, and H147 each contribute to the Zn(2+) site.

Belongs to the MshB deacetylase family. The cofactor is Zn(2+).

The catalysed reaction is 1D-myo-inositol 2-acetamido-2-deoxy-alpha-D-glucopyranoside + H2O = 1D-myo-inositol 2-amino-2-deoxy-alpha-D-glucopyranoside + acetate. Catalyzes the deacetylation of 1D-myo-inositol 2-acetamido-2-deoxy-alpha-D-glucopyranoside (GlcNAc-Ins) in the mycothiol biosynthesis pathway. This is 1D-myo-inositol 2-acetamido-2-deoxy-alpha-D-glucopyranoside deacetylase from Thermobifida fusca (strain YX).